Consider the following 363-residue polypeptide: G kinase-anchoring protein 1-B (363 aa).

Disordered regions lie at residues A17–A79 and V147–K182. Positions K50–A79 form a coiled coil. Residues K160 to N170 show a composition bias toward basic residues. Coiled coils occupy residues D249–E298 and A328–Q348.

This sequence belongs to the GKAP1 family.

It is found in the golgi apparatus. Its function is as follows. May play a role in the regulation of insulin-dependent IRS1 tyrosine phosphorylation in adipocytes. This Xenopus laevis (African clawed frog) protein is G kinase-anchoring protein 1-B (gkap1-b).